Reading from the N-terminus, the 279-residue chain is Probable endonuclease 4 (279 aa).

Zn(2+)-binding residues include H69, H109, E145, D179, H182, H216, D229, H231, and E261.

The protein belongs to the AP endonuclease 2 family. Requires Zn(2+) as cofactor.

The enzyme catalyses Endonucleolytic cleavage to 5'-phosphooligonucleotide end-products.. In terms of biological role, endonuclease IV plays a role in DNA repair. It cleaves phosphodiester bonds at apurinic or apyrimidinic (AP) sites, generating a 3'-hydroxyl group and a 5'-terminal sugar phosphate. This chain is Probable endonuclease 4, found in Chlorobium phaeovibrioides (strain DSM 265 / 1930) (Prosthecochloris vibrioformis (strain DSM 265)).